A 374-amino-acid polypeptide reads, in one-letter code: uncharacterized protein (374 aa).

ATP is bound at residue 29–36 (GSLNSGKS).

It belongs to the archaeal ATPase family.

This is an uncharacterized protein from Methanocaldococcus jannaschii (strain ATCC 43067 / DSM 2661 / JAL-1 / JCM 10045 / NBRC 100440) (Methanococcus jannaschii).